The following is a 130-amino-acid chain: MIQTQNYGTGRRKSSSARVFLRSGNGEIVVNKRSLNEYFGRETSCMIVRQPLELVDMVDKFNIYITVKGGGISGQAGAIRQGITRALIKYNQTLRFELRKAGFVTRDSRQVERKKVGFRKARKRPQFSKR.

It belongs to the universal ribosomal protein uS9 family.

This is Small ribosomal subunit protein uS9 from Buchnera aphidicola subsp. Acyrthosiphon pisum (strain 5A).